The primary structure comprises 211 residues: Small ribosomal subunit protein uS3 (211 aa).

In terms of domain architecture, KH type-2 spans 38-106; the sequence is LRKFIKKAFY…NIELNIIEVK (69 aa).

It belongs to the universal ribosomal protein uS3 family. Part of the 30S ribosomal subunit. Forms a tight complex with proteins S10 and S14.

Its function is as follows. Binds the lower part of the 30S subunit head. Binds mRNA in the 70S ribosome, positioning it for translation. The sequence is that of Small ribosomal subunit protein uS3 from Ehrlichia ruminantium (strain Gardel).